Here is a 113-residue protein sequence, read N- to C-terminus: Flagellar hook-basal body complex protein FliE (113 aa).

It belongs to the FliE family.

Its subcellular location is the bacterial flagellum basal body. The protein is Flagellar hook-basal body complex protein FliE of Rhizobium etli (strain CIAT 652).